We begin with the raw amino-acid sequence, 161 residues long: MSIVTKSIVNADAEARYLSPGELDRIKSFVLSGQRRLRIAQILTDNRERIVKQAGQQLFQQRPDIVSPGGNAYGEEMTATCLRDLDYYLRLVTYGVVAGDIAPIEEIGLVGVKEMYNSLGTPISAVAEGIKAMKNVACSLLSGDDSAEAGFYFDYTIGAMQ.

Asn-71 is modified (N4-methylasparagine). (2R,3E)-phycocyanobilin is bound at residue Cys-81.

It belongs to the phycobiliprotein family. In terms of assembly, heterodimer of an alpha and a beta chain. Post-translationally, contains one covalently linked phycocyanobilin chromophore.

It localises to the plastid. It is found in the chloroplast thylakoid membrane. Functionally, light-harvesting photosynthetic bile pigment-protein from the phycobiliprotein complex. Allophycocyanin has a maximum absorption at approximately 650 nanometers. This chain is Allophycocyanin alpha chain (apcA), found in Galdieria sulphuraria (Red alga).